The sequence spans 363 residues: Phospho-N-acetylmuramoyl-pentapeptide-transferase (363 aa).

10 helical membrane-spanning segments follow: residues Tyr33–Pro53, Gly82–Val102, Leu105–Val125, Gly133–His153, Pro166–Ile186, Leu198–Leu218, Leu227–Gly247, Ala271–Met291, Val295–Val315, and Val340–Phe360.

It belongs to the glycosyltransferase 4 family. MraY subfamily. Mg(2+) serves as cofactor.

Its subcellular location is the cell inner membrane. It catalyses the reaction UDP-N-acetyl-alpha-D-muramoyl-L-alanyl-gamma-D-glutamyl-meso-2,6-diaminopimeloyl-D-alanyl-D-alanine + di-trans,octa-cis-undecaprenyl phosphate = di-trans,octa-cis-undecaprenyl diphospho-N-acetyl-alpha-D-muramoyl-L-alanyl-D-glutamyl-meso-2,6-diaminopimeloyl-D-alanyl-D-alanine + UMP. The protein operates within cell wall biogenesis; peptidoglycan biosynthesis. Functionally, catalyzes the initial step of the lipid cycle reactions in the biosynthesis of the cell wall peptidoglycan: transfers peptidoglycan precursor phospho-MurNAc-pentapeptide from UDP-MurNAc-pentapeptide onto the lipid carrier undecaprenyl phosphate, yielding undecaprenyl-pyrophosphoryl-MurNAc-pentapeptide, known as lipid I. In Treponema pallidum (strain Nichols), this protein is Phospho-N-acetylmuramoyl-pentapeptide-transferase.